We begin with the raw amino-acid sequence, 381 residues long: Acetylornithine deacetylase (381 aa).

Histidine 79 contributes to the Zn(2+) binding site. Residue aspartate 81 is part of the active site. Aspartate 111 serves as a coordination point for Zn(2+). Glutamate 143 is a catalytic residue. Residues glutamate 144, glutamate 168, and histidine 354 each coordinate Zn(2+).

The protein belongs to the peptidase M20A family. ArgE subfamily. As to quaternary structure, homodimer. Requires Zn(2+) as cofactor. Co(2+) is required as a cofactor. Glutathione serves as cofactor.

It localises to the cytoplasm. The catalysed reaction is N(2)-acetyl-L-ornithine + H2O = L-ornithine + acetate. Its pathway is amino-acid biosynthesis; L-arginine biosynthesis; L-ornithine from N(2)-acetyl-L-ornithine (linear): step 1/1. Its function is as follows. Catalyzes the hydrolysis of the amide bond of N(2)-acetylated L-amino acids. Cleaves the acetyl group from N-acetyl-L-ornithine to form L-ornithine, an intermediate in L-arginine biosynthesis pathway, and a branchpoint in the synthesis of polyamines. This chain is Acetylornithine deacetylase, found in Buchnera aphidicola subsp. Acyrthosiphon pisum (strain Tuc7).